Consider the following 419-residue polypeptide: UDP-N-acetylmuramoylalanine--D-glutamate ligase (419 aa).

109-115 (GSTGKTT) contributes to the ATP binding site.

Belongs to the MurCDEF family.

Its subcellular location is the cytoplasm. The catalysed reaction is UDP-N-acetyl-alpha-D-muramoyl-L-alanine + D-glutamate + ATP = UDP-N-acetyl-alpha-D-muramoyl-L-alanyl-D-glutamate + ADP + phosphate + H(+). It functions in the pathway cell wall biogenesis; peptidoglycan biosynthesis. Its function is as follows. Cell wall formation. Catalyzes the addition of glutamate to the nucleotide precursor UDP-N-acetylmuramoyl-L-alanine (UMA). This is UDP-N-acetylmuramoylalanine--D-glutamate ligase from Chlamydia felis (strain Fe/C-56) (Chlamydophila felis).